A 265-amino-acid chain; its full sequence is Flagellar basal-body rod protein FlgG (265 aa).

This sequence belongs to the flagella basal body rod proteins family. As to quaternary structure, the basal body constitutes a major portion of the flagellar organelle and consists of four rings (L,P,S, and M) mounted on a central rod. The rod consists of about 26 subunits of FlgG in the distal portion, and FlgB, FlgC and FlgF are thought to build up the proximal portion of the rod with about 6 subunits each.

Its subcellular location is the bacterial flagellum basal body. The polypeptide is Flagellar basal-body rod protein FlgG (flgG) (Borreliella burgdorferi (strain ATCC 35210 / DSM 4680 / CIP 102532 / B31) (Borrelia burgdorferi)).